The following is a 73-amino-acid chain: Dermaseptin-H4 (73 aa).

The first 22 residues, 1-22, serve as a signal peptide directing secretion; it reads MAFMKKSLFLVLFLGMVSLSIC. Positions 23–43 are excised as a propeptide; that stretch reads EEEKRENEDEAKQEDDEQSEM. Residues 25-45 are disordered; it reads EKRENEDEAKQEDDEQSEMKR. A compositionally biased stretch (acidic residues) spans 30-40; it reads EDEAKQEDDEQ. L70 carries the post-translational modification Leucine amide. Positions 72 to 73 are excised as a propeptide; that stretch reads EQ.

As to expression, expressed by the skin glands.

The protein resides in the secreted. Has antibacterial activity against the Gram-negative bacteria E.coli ATCC 11775 (MIC=0.8 uM), and the Gram-positive bacteria S.aureus ATCC 12600 (MIC=0.4 uM) and M.luteus ATCC 49732 (MIC=0.8 uM). Does not inhibit the growth of the fungus C.albicans. Probably acts by disturbing membrane functions with its amphipathic structure. The sequence is that of Dermaseptin-H4 from Pithecopus azureus (Orange-legged monkey tree frog).